The primary structure comprises 258 residues: uncharacterized protein (258 aa).

This is an uncharacterized protein from Mycobacterium tuberculosis (strain CDC 1551 / Oshkosh).